Here is a 642-residue protein sequence, read N- to C-terminus: Threonine--tRNA ligase (642 aa).

A TGS domain is found at 1–61 (MPIITLPDGS…EQDSQLAIIT (61 aa)). Positions 243–534 (DHRKIGKQLD…LTEEYAGFFP (292 aa)) are catalytic. Cys-334, His-385, and His-511 together coordinate Zn(2+).

This sequence belongs to the class-II aminoacyl-tRNA synthetase family. As to quaternary structure, homodimer. It depends on Zn(2+) as a cofactor.

It is found in the cytoplasm. It carries out the reaction tRNA(Thr) + L-threonine + ATP = L-threonyl-tRNA(Thr) + AMP + diphosphate + H(+). In terms of biological role, catalyzes the attachment of threonine to tRNA(Thr) in a two-step reaction: L-threonine is first activated by ATP to form Thr-AMP and then transferred to the acceptor end of tRNA(Thr). Also edits incorrectly charged L-seryl-tRNA(Thr). In Proteus mirabilis (strain HI4320), this protein is Threonine--tRNA ligase.